The sequence spans 407 residues: Gonadotropin-releasing hormone receptor (407 aa).

At 1–36 the chain is on the extracellular side; it reads MDYLNDSMFNNMTYNITSTPLPDAPRFDNVYVSKLC. N-linked (GlcNAc...) asparagine glycosylation is found at Asn-5, Asn-11, and Asn-15. Residues 37–57 traverse the membrane as a helical segment; the sequence is VLGTVFVISFFGNTLVIIQIF. The Cytoplasmic portion of the chain corresponds to 58–69; it reads RIRGSRSTIQSL. The helical transmembrane segment at 70–90 threads the bilayer; that stretch reads ILNLAIADLMVSFFNILMDII. Over 91–105 the chain is Extracellular; the sequence is WSATVEWLAGNTMCK. Cysteines 104 and 183 form a disulfide. The helical transmembrane segment at 106 to 126 threads the bilayer; sequence IMKYLTVFGLHLSTYITVSIA. Over 127–147 the chain is Cytoplasmic; the sequence is LDRCFAILSPMSRSKAPLRVR. The chain crosses the membrane as a helical span at residues 148–168; it reads IMITMAWVLSAIFSIPQAVIF. The Extracellular segment spans residues 169–199; sequence QEQRKMFRQGMFHQCRDSYNALWQKQLYSAS. The helical transmembrane segment at 200–220 threads the bilayer; the sequence is SLILLFVIPLIIMVTSYLLIL. Topologically, residues 221–268 are cytoplasmic; the sequence is KTIVKTSRQFHDTPISPTSMSCYSVNHGQIRTHLFERARKRSSRMSAV. A helical membrane pass occupies residues 269-289; sequence IVAAFILCWTPYYIIFLGFAF. At 290-298 the chain is on the extracellular side; the sequence is FQWDNSRTV. The helical transmembrane segment at 299-319 threads the bilayer; sequence IYFFTLGTSNCMLNPLIYGAF. Over 320–407 the chain is Cytoplasmic; it reads TIYKVHRGRS…NGKMPTKPPG (88 aa). A disordered region spans residues 377-407; the sequence is SLTNPHQPVRPSPGINSTTSPNGKMPTKPPG.

This sequence belongs to the G-protein coupled receptor 1 family. As to expression, widely expressed in peripheral nervous tissue, gonadal tissue and brain. In the brain, expression is high in the palliovisceral lobe and superior buccal lobe but low in the subvertical lobe, superior and inferior frontal lobe, posterior brachial lobe and pedal lobe. Expressed in stomach, rectum, aorta, heart, salivary gland, branchia, pancreas, radula retractor muscle, branchial vessel but not in white body, esophagus, liver and kidney.

The protein localises to the cell membrane. In terms of biological role, receptor for gonadotropin releasing hormone (GnRH) that mediates the action of GnRH to stimulate the secretion of the gonadotropic hormones luteinizing hormone (LH) and follicle-stimulating hormone (FSH). This receptor mediates its action by association with G-proteins that activate a phosphatidylinositol-calcium second messenger system. Ligand interaction triggers steroidogenesis in spermatozoa and follicles. Appears to be involved in contraction of the radula retractor muscle. The chain is Gonadotropin-releasing hormone receptor from Octopus vulgaris (Common octopus).